The primary structure comprises 133 residues: Fluoride-specific ion channel FluC (133 aa).

Transmembrane regions (helical) follow at residues 3–23 (AVVW…GSGL), 41–61 (WGTL…LIWV), 76–96 (IVGL…CLVF), and 103–123 (LIVG…VFLG). Residues glycine 81 and threonine 84 each contribute to the Na(+) site.

The protein belongs to the fluoride channel Fluc/FEX (TC 1.A.43) family.

The protein localises to the cell inner membrane. It catalyses the reaction fluoride(in) = fluoride(out). Its activity is regulated as follows. Na(+) is not transported, but it plays an essential structural role and its presence is essential for fluoride channel function. Functionally, fluoride-specific ion channel. Important for reducing fluoride concentration in the cell, thus reducing its toxicity. In Xylella fastidiosa (strain M23), this protein is Fluoride-specific ion channel FluC.